We begin with the raw amino-acid sequence, 340 residues long: Probable rRNA-processing protein EBP2 homolog (340 aa).

Basic residues predominate over residues 1 to 10 (MVRKMNKLAK). Disordered stretches follow at residues 1 to 59 (MVRK…DDDE) and 245 to 340 (HGLD…RGRR). Acidic residues-rich tracts occupy residues 23–37 (PESD…FDNA) and 46–59 (MDIE…DDDE). Positions 206-245 (QKEVLAAKNTEKKNLAEAVKKHKKGMKQQLEDMLNNVKRH) form a coiled coil. Gly residues-rich tracts occupy residues 264-277 (GRGG…GRGG) and 318-333 (PRGG…GRGG).

This sequence belongs to the EBP2 family.

It is found in the nucleus. The protein localises to the nucleolus. Its function is as follows. Required for the processing of the 27S pre-rRNA. The protein is Probable rRNA-processing protein EBP2 homolog of Caenorhabditis elegans.